Consider the following 160-residue polypeptide: UPF0479 membrane protein YER190C-B (160 aa).

Helical transmembrane passes span 39–59 (IVFC…KVLQ) and 136–156 (VPMI…ISQH).

The protein belongs to the UPF0479 family.

The protein localises to the membrane. The polypeptide is UPF0479 membrane protein YER190C-B (Saccharomyces cerevisiae (strain ATCC 204508 / S288c) (Baker's yeast)).